Consider the following 313-residue polypeptide: Protein-methionine-sulfoxide reductase catalytic subunit MsrP (313 aa).

The segment at residues 1–45 (MPAYRPPHIASSEITPKSFYLSRRNFLGTAAGLAAIGLAGREAIA) is a signal peptide (tat-type signal). Mo-molybdopterin is bound by residues N71, 74–75 (YE), C128, T163, N213, R218, and 229–231 (GIK).

It belongs to the MsrP family. As to quaternary structure, heterodimer of a catalytic subunit (MsrP) and a heme-binding subunit (MsrQ). Mo-molybdopterin serves as cofactor. In terms of processing, predicted to be exported by the Tat system. The position of the signal peptide cleavage has not been experimentally proven.

Its subcellular location is the periplasm. It catalyses the reaction L-methionyl-[protein] + a quinone + H2O = L-methionyl-(S)-S-oxide-[protein] + a quinol. The enzyme catalyses L-methionyl-[protein] + a quinone + H2O = L-methionyl-(R)-S-oxide-[protein] + a quinol. Functionally, part of the MsrPQ system that repairs oxidized periplasmic proteins containing methionine sulfoxide residues (Met-O), using respiratory chain electrons. Thus protects these proteins from oxidative-stress damage caused by reactive species of oxygen and chlorine generated by the host defense mechanisms. MsrPQ is essential for the maintenance of envelope integrity under bleach stress, rescuing a wide series of structurally unrelated periplasmic proteins from methionine oxidation. The catalytic subunit MsrP is non-stereospecific, being able to reduce both (R-) and (S-) diastereoisomers of methionine sulfoxide. The polypeptide is Protein-methionine-sulfoxide reductase catalytic subunit MsrP (Agrobacterium fabrum (strain C58 / ATCC 33970) (Agrobacterium tumefaciens (strain C58))).